Here is a 684-residue protein sequence, read N- to C-terminus: ATP-dependent DNA helicase RecG (684 aa).

The segment at 51-148 is wedge domain; it reads RHIASMATLQ…ADVPQFQAPH (98 aa). Positions 278 to 439 constitute a Helicase ATP-binding domain; sequence DLARHRPMRR…VHADLEVSVI (162 aa). 291-298 is a binding site for ATP; the sequence is GDVGSGKT. Positions 392-395 match the DEAH box motif; sequence DEQH.

It belongs to the helicase family. RecG subfamily. In terms of assembly, monomer.

It catalyses the reaction Couples ATP hydrolysis with the unwinding of duplex DNA by translocating in the 3'-5' direction.. The catalysed reaction is ATP + H2O = ADP + phosphate + H(+). Functionally, plays a critical role in recombination and DNA repair. Helps process Holliday junction intermediates to mature products by catalyzing branch migration. Has replication fork regression activity, unwinds stalled or blocked replication forks to make a HJ that can be resolved. Has a DNA unwinding activity characteristic of a DNA helicase with 3'-5' polarity. The chain is ATP-dependent DNA helicase RecG from Acidithiobacillus ferridurans.